The chain runs to 257 residues: Movement protein (257 aa).

The disordered stretch occupies residues 212 to 257; that stretch reads NQSKKGSNKYVGKRNDNKGLNKEGKLFDKVRIGQNSESSDAESSSF. The segment covering 224–242 has biased composition (basic and acidic residues); it reads KRNDNKGLNKEGKLFDKVR. Residues 247–257 are compositionally biased toward low complexity; the sequence is SESSDAESSSF.

Belongs to the tobamovirus movement protein family.

Its subcellular location is the host cytoplasm. It is found in the host cytoskeleton. The protein localises to the host cell junction. The protein resides in the host plasmodesma. Transports viral genome to neighboring plant cells directly through plasmosdesmata, without any budding. The movement protein allows efficient cell to cell propagation, by bypassing the host cell wall barrier. Forms a ribonucleoprotein complex with viral RNA. Binds microtubules and modulates microtubule stability. Can bind double-stranded DNA. The sequence is that of Movement protein (MP) from Pepper mild mottle virus (strain Spain) (PMMV-S).